Here is an 831-residue protein sequence, read N- to C-terminus: MAFRATPGRTPPGPGPGVPSASFSSPQPAMAAPGGIEEEDEEEPAEIHLCVLWSSGYLGIAYYDTSDSTIHFMPDAPDHESLKLLQRVLDEINPQSVVTSAKQDEAMTQFLGKLASQEHREPKRPEIILLPSVDFGPEISKQRLLSGNYSFISESMTATEKILFLSSIIPFDCVLTVRALGGLLKFLSRRRVGVELEDYSVGVPILGFKKFVLTHLVSIDQDTYSVLQIFKSESHPSVYKVASGLKEGLSLFGILNRCRCRWGQKLLRLWFTRPTRELRELNSRLDVIEFFLMPQNLDMAQMMHRLLSHIKNVPLILKRMKLSHTKVSDWQVLYKTVYSALGLRDACRSLPQSIQLFRDITQEFSDDLHHIASLIGKVVDFEESLAENRFTVLPNIDPEIDAKKRRLMGLPSFLTEVAQKELENLDSCIPSCSVIYIPLIGFLLSIPRLSFMVEASDFEIEGLDFMFLSEDKLHYRSARTKELDALLGDLHCEIRDQEMLLMHQLQCQVLARAPVLTRVLDLASRLDVLLALASAARDYGYSRPHYSPCIQGVRIKNGRHPLMELCARTFVPNSTDCGGDQGRVKVITGPNSSGKSIYLKQVGLITFMALVGSFVPAEEAEIGVIDAIFTRIHSCESISLGLSTFMIDLNQVAKAVNNATEHSLVLIDEFGKGTNSVDGLALLTAVLRHWLALGPSCPHIFVATNFLSLVQLQLLPQGPLVQYLTMETCEDGNDLVFFYQLCHGVASASHASYTAAQAGLPDPLIARGKEVSDSIRSGKPVKPMHELVRRTQMENCQALVDKFLKLDLEDPSLDLDIFISQEVLPAATTIL.

The disordered stretch occupies residues 1 to 43 (MAFRATPGRTPPGPGPGVPSASFSSPQPAMAAPGGIEEEDEEE). 589–596 (GPNSSGKS) lines the ATP pocket.

The protein belongs to the DNA mismatch repair MutS family. As to quaternary structure, heterooligomer of MSH4 and MSH5. Interacts with HJURP. Interacts with C7h12orf40/REDIC1.

In terms of biological role, involved in DNA mismatch repair and meiotic recombination processes. Facilitates crossovers between homologs during meiosis. This chain is MutS protein homolog 5 (Msh5), found in Rattus norvegicus (Rat).